The sequence spans 217 residues: Glycerol-3-phosphate acyltransferase (217 aa).

Transmembrane regions (helical) follow at residues 3-23 (IVIL…VWIG), 56-76 (VLLM…LFGL), 78-98 (GVNP…PIFA), 120-140 (FFIY…MVSL), 142-162 (SMIS…TVPA), and 163-183 (ILPT…TFIF).

Belongs to the PlsY family. As to quaternary structure, probably interacts with PlsX.

It is found in the cell membrane. The catalysed reaction is an acyl phosphate + sn-glycerol 3-phosphate = a 1-acyl-sn-glycero-3-phosphate + phosphate. Its pathway is lipid metabolism; phospholipid metabolism. Functionally, catalyzes the transfer of an acyl group from acyl-phosphate (acyl-PO(4)) to glycerol-3-phosphate (G3P) to form lysophosphatidic acid (LPA). This enzyme utilizes acyl-phosphate as fatty acyl donor, but not acyl-CoA or acyl-ACP. This chain is Glycerol-3-phosphate acyltransferase, found in Enterococcus faecalis (strain ATCC 700802 / V583).